A 396-amino-acid chain; its full sequence is Inositol polyphosphate 1-phosphatase (396 aa).

Asp-54 serves as a coordination point for Li(+). Glu-79 is a binding site for Mg(2+). Glu-80 is a binding site for Li(+). Residues Asp-153 and Ile-155 each coordinate Mg(2+). 1D-myo-inositol 1,4-bisphosphate is bound by residues Asp-156, Ser-157, Thr-158, Ser-264, Lys-266, Gly-286, Ala-287, Lys-290, and Thr-308. Residue Asp-313 coordinates Mg(2+). Ser-314 bears the Phosphoserine mark.

This sequence belongs to the inositol monophosphatase superfamily. In terms of assembly, monomer. Mg(2+) is required as a cofactor.

It catalyses the reaction 1D-myo-inositol 1,4-bisphosphate + H2O = 1D-myo-inositol 4-phosphate + phosphate. The enzyme catalyses 1D-myo-inositol 1,3,4-trisphosphate + H2O = 1D-myo-inositol 3,4-bisphosphate + phosphate. Its pathway is signal transduction; phosphatidylinositol signaling pathway. With respect to regulation, inhibited by Li(+). Functionally, mg(2+)-dependent phosphatase that catalyzes the hydrolysis of the 1-position phosphate from inositol 1,4-bisphosphate and inositol 1,3,4-trisphosphate and participates in inositol phosphate metabolism. This Mus musculus (Mouse) protein is Inositol polyphosphate 1-phosphatase.